We begin with the raw amino-acid sequence, 141 residues long: Small ribosomal subunit protein uS12 (141 aa).

It belongs to the universal ribosomal protein uS12 family. In terms of assembly, part of the 30S ribosomal subunit.

In terms of biological role, with S4 and S5 plays an important role in translational accuracy. Located at the interface of the 30S and 50S subunits. In Methanobrevibacter smithii (strain ATCC 35061 / DSM 861 / OCM 144 / PS), this protein is Small ribosomal subunit protein uS12.